Consider the following 503-residue polypeptide: Lysine--tRNA ligase (503 aa).

Mg(2+) contacts are provided by E412 and E419.

Belongs to the class-II aminoacyl-tRNA synthetase family. Homodimer. Mg(2+) is required as a cofactor.

It localises to the cytoplasm. It catalyses the reaction tRNA(Lys) + L-lysine + ATP = L-lysyl-tRNA(Lys) + AMP + diphosphate. This Idiomarina loihiensis (strain ATCC BAA-735 / DSM 15497 / L2-TR) protein is Lysine--tRNA ligase.